Here is a 39-residue protein sequence, read N- to C-terminus: Photosystem II reaction center protein L (39 aa).

Residues 18–38 form a helical membrane-spanning segment; that stretch reads ILYWGLLLIFVLAVLFSNYFF.

This sequence belongs to the PsbL family. As to quaternary structure, PSII is composed of 1 copy each of membrane proteins PsbA, PsbB, PsbC, PsbD, PsbE, PsbF, PsbH, PsbI, PsbJ, PsbK, PsbL, PsbM, PsbT, PsbX, PsbY, PsbZ, Psb30/Ycf12, at least 3 peripheral proteins of the oxygen-evolving complex and a large number of cofactors. It forms dimeric complexes.

Its subcellular location is the plastid membrane. In terms of biological role, one of the components of the core complex of photosystem II (PSII). PSII is a light-driven water:plastoquinone oxidoreductase that uses light energy to abstract electrons from H(2)O, generating O(2) and a proton gradient subsequently used for ATP formation. It consists of a core antenna complex that captures photons, and an electron transfer chain that converts photonic excitation into a charge separation. This subunit is found at the monomer-monomer interface and is required for correct PSII assembly and/or dimerization. This Cuscuta pentagona (Five-angled dodder) protein is Photosystem II reaction center protein L.